The following is a 773-amino-acid chain: 3-isopropylmalate dehydratase (773 aa).

[4Fe-4S] cluster-binding residues include C355, C415, and C418.

This sequence belongs to the aconitase/IPM isomerase family. Monomer. The cofactor is [4Fe-4S] cluster.

The catalysed reaction is (2R,3S)-3-isopropylmalate = (2S)-2-isopropylmalate. It participates in amino-acid biosynthesis; L-leucine biosynthesis; L-leucine from 3-methyl-2-oxobutanoate: step 2/4. Its function is as follows. Catalyzes the isomerization between 2-isopropylmalate and 3-isopropylmalate, via the formation of 2-isopropylmaleate. The protein is 3-isopropylmalate dehydratase (LEU1) of Mycosarcoma maydis (Corn smut fungus).